Consider the following 405-residue polypeptide: uncharacterized protein (405 aa).

Helical transmembrane passes span 19–39 (IVSIVMFNFASYLTIGLPLAV), 48–68 (MGFSAFWAGLIISLQYFATLL), 85–105 (IVVFGLCGCFLSGLGYLLADI), 106–126 (ASAWPMISLLLLGLGRVILGI), 129–149 (SFAGTGSTLWGVGVVGSLHIG), 156–176 (GIVTYGAMAMGAPLGVLCYAW), 178–198 (GLQGLALTVMGVALLAVLLAL), 224–244 (GMALALASAGFGVIATFITLF), 252–272 (GAAFALTLFSVAFVGTRLLFP), 283–303 (VAMICFGVEIIGLLLVGTAAM), 309–329 (IGVLLTGMGFSLVFPALGVVA), 344–364 (TYTVFMDMSLGVTGPLAGLVM), and 366–386 (WAGVPVIYLAAAGLVAMALLL).

Belongs to the major facilitator superfamily. YhhS family.

The protein resides in the cell inner membrane. This is an uncharacterized protein from Salmonella enteritidis PT4 (strain P125109).